The following is a 40-amino-acid chain: Photosystem II reaction center protein J (40 aa).

A helical membrane pass occupies residues 8–28 (IPLWLIGTIAGILVIGLVGIF).

It belongs to the PsbJ family. PSII is composed of 1 copy each of membrane proteins PsbA, PsbB, PsbC, PsbD, PsbE, PsbF, PsbH, PsbI, PsbJ, PsbK, PsbL, PsbM, PsbT, PsbX, PsbY, PsbZ, Psb30/Ycf12, at least 3 peripheral proteins of the oxygen-evolving complex and a large number of cofactors. It forms dimeric complexes.

The protein resides in the plastid. The protein localises to the chloroplast thylakoid membrane. Functionally, one of the components of the core complex of photosystem II (PSII). PSII is a light-driven water:plastoquinone oxidoreductase that uses light energy to abstract electrons from H(2)O, generating O(2) and a proton gradient subsequently used for ATP formation. It consists of a core antenna complex that captures photons, and an electron transfer chain that converts photonic excitation into a charge separation. This chain is Photosystem II reaction center protein J, found in Anthoceros angustus (Hornwort).